The primary structure comprises 626 residues: Zinc finger protein 471 (626 aa).

One can recognise a KRAB domain in the interval 14–85; that stretch reads VTFKDVAIDF…TSEMTRSPFS (72 aa). C2H2-type zinc fingers lie at residues 206–228, 234–256, 262–284, 290–312, 318–340, 346–369, 375–397, 403–425, 431–453, 459–481, 487–509, 515–537, 543–565, 571–593, and 599–621; these read FKCNECDKTFTHSSSLTVHFRIH, YACEECGKAFKQRQHLAQHHRTH, FECKECRKAFKQSEHLIQHQRIH, YKCKECRKAFRQPAHLAQHQRIH, YECKECGKAFSDGSSFARHQRCH, YECIECGKAFRYNTSFIRHWRSYH, FNCIDCGKAFSVHIGLILHRRIH, YKCGVCGKTFSSGSSRTVHQRIH, YECDICGKDFSHHASLTQHQRVH, YECKECGKAFRQNVHLVSHLRIH, YECKECGKAFRISSQLATHQRIH, YECIECGNAFKQRSHLAQHQKTH, YECNECGKAFSQTSNLTQHQRIH, YKCTECGKAFSDSSSCAQHQRLH, and YQCFECGKAFRRKLSLICHQRSH.

This sequence belongs to the krueppel C2H2-type zinc-finger protein family.

It is found in the nucleus. In terms of biological role, may be involved in transcriptional regulation. This chain is Zinc finger protein 471 (ZNF471), found in Homo sapiens (Human).